Reading from the N-terminus, the 676-residue chain is Pentatricopeptide repeat-containing protein ATP4 homolog, chloroplastic (676 aa).

The N-terminal 73 residues, 1-73, are a transit peptide targeting the chloroplast; that stretch reads MASPSSLLSW…NSPRAAGLAR (73 aa). A disordered region spans residues 17-58; sequence LSFQPKNPSPSPATARVSVQDPPPPPSDANPSPGRSSNTSRY. PPR repeat units follow at residues 148 to 182, 183 to 217, 218 to 252, 253 to 287, 288 to 322, 323 to 353, 358 to 388, 396 to 430, 431 to 465, and 532 to 566; these read EVIL…GVQP, DNAT…GCSP, DMLT…KWQL, DPVI…GVKP, NLVV…EAVP, NKAT…MKDE, DVVL…MKAS, DSWS…GFKP, NIFI…GITP, and RMPY…GIYS. Positions 578–662 constitute a Smr domain; sequence LHLRGLSVGA…WFLTTSVAAR (85 aa).

It belongs to the PPR family. P subfamily.

Its subcellular location is the plastid. The protein resides in the chloroplast. Functionally, involved in translation and accumulation of chloroplast ATP synthase subunits. The protein is Pentatricopeptide repeat-containing protein ATP4 homolog, chloroplastic of Oryza sativa subsp. japonica (Rice).